Reading from the N-terminus, the 279-residue chain is HTH-type transcriptional regulator HdfR (279 aa).

The HTH lysR-type domain maps to 1 to 58; the sequence is MDTELLKTFLEVSRTRHFGRAAESLYLTQSAVSFRIRQLENQLGVNLFTRHRNNIRLT. Positions 18–37 form a DNA-binding region, H-T-H motif; the sequence is FGRAAESLYLTQSAVSFRIR.

This sequence belongs to the LysR transcriptional regulatory family.

In terms of biological role, negatively regulates the transcription of the flagellar master operon flhDC by binding to the upstream region of the operon. This chain is HTH-type transcriptional regulator HdfR, found in Escherichia coli O7:K1 (strain IAI39 / ExPEC).